The sequence spans 302 residues: Oxaloacetate decarboxylase 2 (302 aa).

Serine 50 serves as a coordination point for substrate. Aspartate 88 is a Mg(2+) binding site. Arginine 159 and histidine 235 together coordinate substrate.

The protein belongs to the isocitrate lyase/PEP mutase superfamily. Oxaloacetate decarboxylase family. Homotetramer; dimer of dimers. It depends on Mg(2+) as a cofactor.

The enzyme catalyses oxaloacetate + H(+) = pyruvate + CO2. Functionally, catalyzes the decarboxylation of oxaloacetate into pyruvate. Seems to play a role in maintaining cellular concentrations of bicarbonate and pyruvate. The sequence is that of Oxaloacetate decarboxylase 2 from Pseudomonas putida (strain W619).